Reading from the N-terminus, the 93-residue chain is Cell division protein FtsB (93 aa).

Residues 1–3 lie on the Cytoplasmic side of the membrane; that stretch reads MRL. A helical transmembrane segment spans residues 4 to 21; that stretch reads FILSLFALLVMFQYDFWF. The Periplasmic segment spans residues 22-93; that stretch reads GKNGYLDYQD…FYRIVKNKNR (72 aa). A coiled-coil region spans residues 28-76; it reads DYQDIKAEIIQRKQENKKLSQRNQTIFAEIQDLKNGIEAIEERARMEHE.

Belongs to the FtsB family. In terms of assembly, part of a complex composed of FtsB, FtsL and FtsQ.

Its subcellular location is the cell inner membrane. In terms of biological role, essential cell division protein. May link together the upstream cell division proteins, which are predominantly cytoplasmic, with the downstream cell division proteins, which are predominantly periplasmic. This chain is Cell division protein FtsB, found in Histophilus somni (strain 129Pt) (Haemophilus somnus).